The primary structure comprises 182 residues: Peptidoglycan-recognition protein SB2 (182 aa).

Positions 1–17 are cleaved as a signal peptide; the sequence is MKLQLALVLCGLTLALG. An N-acetylmuramoyl-L-alanine amidase domain is found at 40–165; the sequence is PVRLIIIHHT…CQTKATACPG (126 aa). Residue His-47 participates in Zn(2+) binding. Cysteines 54 and 60 form a disulfide. An N-linked (GlcNAc...) asparagine glycan is attached at Asn-149. Residues His-155 and Cys-163 each contribute to the Zn(2+) site.

This sequence belongs to the N-acetylmuramoyl-L-alanine amidase 2 family. The cofactor is Zn(2+).

The protein localises to the secreted. It catalyses the reaction Hydrolyzes the link between N-acetylmuramoyl residues and L-amino acid residues in certain cell-wall glycopeptides.. Functionally, N-acetylmuramyl-L-alanine amidase involved in innate immunity by degrading bacterial peptidoglycans (PGN). Probably plays a scavenger role by digesting biologically active PGN into biologically inactive fragments. Has no direct bacteriolytic activity. The protein is Peptidoglycan-recognition protein SB2 (PGRP-SB2) of Drosophila simulans (Fruit fly).